A 945-amino-acid chain; its full sequence is MSELSSLFIKMAEKWQAKWAEARVYEPEPRPGAAKFFVTAAYPYPNGAIHIGHGRTYLIADVLARFHRHMGRVVLFPMGFHYTGTPILTIAEAIASGDATVIEEYMAIYGVPKDEIEKMGNPLYLARYFHEQSKRAMQKFGLGIDWTREFTTIDPEYQRFIQWQFEKLRERGLIVRGRHPVGWCPRHSMPVGAHDTKDDKEPEIGQWTLIYFADGEGLVFPAATLRPETVLGVTNMWINPDAEYAVIEHNGRKMVVSKDAAFRLSFQGDVRILREARGREFVGRSVQNPVTGEWVPVYEAKFVDPKVGTGVVMSVPAHAPYDYAALRDLNAVRLIPLIRVEGYGDYPAKEVVERMGIKSQTDPALEEATREVYSAEYTKGVMREDVVGRVGAHLSEPARSMLRAVFKMYFAGRPVREAREFISKWLVEAGIGGVMYDIMNKPVYCRCGTEIVVKVLEDQWFINYGEGRWKELARKLVEEMAIVPPEAKAHFLATIDWLDKRACARTRGLGTPLPWSDGWVIESLSDSTIYMAFYTVIKRIRQFGIKPEQLIKEFWDYVFLGVGTPEEVAKRTGVPPEQLKAIREEFDFWYPLDSRNSGKDLIPNHLTFFIFNHVAIFPREKWPRQIVANGWVLREGEKMSKSKRNVLPLDKAVDMYGPDPLRATLAITAEVEQDLDFRHAEAIRNAQQLMSIYSLAQRLAQTAEDRSPNWLDKWLVSEIALVLERAREAYEKVRVRQAAVEVLYNAKSVFDQYLASVERPSKLAVEAARAWAVAMEPIAPHLAEEIWSILGGEGLVVKAPWPQLRPDPVALLAKRYVDMVIDDVKRIPAFGEGVKRVVIYVNPNYAWVKAALSGDVKAVINAGAPPQAAKRVVDIVKTLGDELRGLISAVGKFDEAEALASYKNYMEKALGAPMEIYNADDPSAPDLGSKKKVALPLRPGIYIEK.

The short motif at 43–53 (PYPNGAIHIGH) is the 'HIGH' region element. Positions 638 to 642 (KMSKS) match the 'KMSKS' region motif. ATP is bound at residue lysine 641.

Belongs to the class-I aminoacyl-tRNA synthetase family.

It is found in the cytoplasm. The catalysed reaction is tRNA(Leu) + L-leucine + ATP = L-leucyl-tRNA(Leu) + AMP + diphosphate. The protein is Leucine--tRNA ligase of Pyrobaculum aerophilum (strain ATCC 51768 / DSM 7523 / JCM 9630 / CIP 104966 / NBRC 100827 / IM2).